The chain runs to 352 residues: Phosphoribosylformylglycinamidine cyclo-ligase (352 aa).

Belongs to the AIR synthase family.

It is found in the cytoplasm. It carries out the reaction 2-formamido-N(1)-(5-O-phospho-beta-D-ribosyl)acetamidine + ATP = 5-amino-1-(5-phospho-beta-D-ribosyl)imidazole + ADP + phosphate + H(+). It functions in the pathway purine metabolism; IMP biosynthesis via de novo pathway; 5-amino-1-(5-phospho-D-ribosyl)imidazole from N(2)-formyl-N(1)-(5-phospho-D-ribosyl)glycinamide: step 2/2. This chain is Phosphoribosylformylglycinamidine cyclo-ligase, found in Stenotrophomonas maltophilia (strain R551-3).